The primary structure comprises 249 residues: Ubiquinone/menaquinone biosynthesis C-methyltransferase UbiE (249 aa).

Residues T72, D93, and 121–122 (DA) each bind S-adenosyl-L-methionine.

Belongs to the class I-like SAM-binding methyltransferase superfamily. MenG/UbiE family.

It catalyses the reaction a 2-demethylmenaquinol + S-adenosyl-L-methionine = a menaquinol + S-adenosyl-L-homocysteine + H(+). It carries out the reaction a 2-methoxy-6-(all-trans-polyprenyl)benzene-1,4-diol + S-adenosyl-L-methionine = a 5-methoxy-2-methyl-3-(all-trans-polyprenyl)benzene-1,4-diol + S-adenosyl-L-homocysteine + H(+). It functions in the pathway quinol/quinone metabolism; menaquinone biosynthesis; menaquinol from 1,4-dihydroxy-2-naphthoate: step 2/2. It participates in cofactor biosynthesis; ubiquinone biosynthesis. In terms of biological role, methyltransferase required for the conversion of demethylmenaquinol (DMKH2) to menaquinol (MKH2) and the conversion of 2-polyprenyl-6-methoxy-1,4-benzoquinol (DDMQH2) to 2-polyprenyl-3-methyl-6-methoxy-1,4-benzoquinol (DMQH2). The sequence is that of Ubiquinone/menaquinone biosynthesis C-methyltransferase UbiE from Saccharophagus degradans (strain 2-40 / ATCC 43961 / DSM 17024).